The following is a 125-amino-acid chain: Protein ApaG (125 aa).

The region spanning 1-125 is the ApaG domain; sequence MINSPRVCIQ…FRLAVPTLIH (125 aa).

This Salmonella arizonae (strain ATCC BAA-731 / CDC346-86 / RSK2980) protein is Protein ApaG.